Reading from the N-terminus, the 338-residue chain is L-serine dehydratase (338 aa).

Lys39 is subject to N6-(pyridoxal phosphate)lysine.

The protein belongs to the serine/threonine dehydratase family. The cofactor is pyridoxal 5'-phosphate.

The protein resides in the cytoplasm. It catalyses the reaction L-serine = pyruvate + NH4(+). Its pathway is carbohydrate biosynthesis; gluconeogenesis. The chain is L-serine dehydratase (SDL1) from Saccharomyces cerevisiae (strain YJM789) (Baker's yeast).